A 1756-amino-acid chain; its full sequence is Protein TIC 214 (1756 aa).

Helical transmembrane passes span 18 to 38 (VSGP…LPFG), 54 to 74 (GYGI…FLSM), 79 to 99 (IYAA…YMFF), 128 to 148 (LFMD…NPVL), 163 to 183 (ISFM…LTIF), and 210 to 230 (FSLL…LPFL). Residues 1469–1504 (KNKQVEDGQDKNGQVEDQDGQDQDGQVEDQQTDGKK) are disordered. Residues 1471-1482 (KQVEDGQDKNGQ) show a composition bias toward basic and acidic residues. Positions 1484–1499 (EDQDGQDQDGQVEDQQ) are enriched in acidic residues.

Belongs to the TIC214 family. As to quaternary structure, part of the Tic complex.

It localises to the plastid. It is found in the chloroplast inner membrane. Involved in protein precursor import into chloroplasts. May be part of an intermediate translocation complex acting as a protein-conducting channel at the inner envelope. This chain is Protein TIC 214, found in Pinus thunbergii (Japanese black pine).